The chain runs to 902 residues: Cysteine-tryptophan domain-containing zinc finger protein 3 (902 aa).

The CW-type zinc finger occupies 21 to 74 (VLIEDNWVCCDMCHKWRLLPYGTNTSMLPKKWICSMLDWLPGMNKCDISEDETT). Zn(2+) contacts are provided by Cys-30, Cys-33, Cys-54, and Cys-66. Disordered regions lie at residues 131–233 (EHDQ…EDRH), 326–345 (EDNR…NENL), 420–480 (QSST…LNAD), and 537–651 (HGPT…SASP). 2 stretches are compositionally biased toward basic and acidic residues: residues 151 to 169 (KNRE…DPVS) and 193 to 203 (SHSDGGDLTEK). Residues 204–213 (SKKHSKSKNR) are compositionally biased toward basic residues. Basic and acidic residues-rich tracts occupy residues 214–233 (RGID…EDRH) and 335–345 (HTSKGGDNENL). The span at 421 to 433 (SSTVATSSSSKVS) shows a compositional bias: low complexity. 3 stretches are compositionally biased toward polar residues: residues 450–463 (ESVS…SNTD), 564–588 (NSAP…QIEM), and 599–611 (IDNQ…IGQD). The span at 612–625 (NHSHMKEGKSEVHT) shows a compositional bias: basic and acidic residues. Polar residues predominate over residues 634–648 (KNHTQLRSNVENGDS).

Expressed in leaf sheaths, flag leaves, nodes, internodes and panicles.

It is found in the nucleus. In terms of biological role, binds to histones H3K4me1, H3K4me2 and H3K4me3 in GST pull-down assay. May facilitate the recruitment of effectors to mediate gene expression. The protein is Cysteine-tryptophan domain-containing zinc finger protein 3 of Oryza sativa subsp. japonica (Rice).